We begin with the raw amino-acid sequence, 297 residues long: Acetaldehyde dehydrogenase (297 aa).

Cysteine 128 acts as the Acyl-thioester intermediate in catalysis. NAD(+)-binding positions include 159-167 (SAGPGTRQN) and asparagine 272.

This sequence belongs to the acetaldehyde dehydrogenase family.

It catalyses the reaction acetaldehyde + NAD(+) + CoA = acetyl-CoA + NADH + H(+). This chain is Acetaldehyde dehydrogenase, found in Desulfitobacterium hafniense (strain DSM 10664 / DCB-2).